We begin with the raw amino-acid sequence, 273 residues long: Dermonecrotic toxin LdSicTox-alphaIB3avi (273 aa).

Residue His-5 is part of the active site. Residues Glu-25 and Asp-27 each contribute to the Mg(2+) site. His-41 serves as the catalytic Nucleophile. Intrachain disulfides connect Cys-45-Cys-51 and Cys-47-Cys-190. Asp-85 is a Mg(2+) binding site.

This sequence belongs to the arthropod phospholipase D family. Class II subfamily. It depends on Mg(2+) as a cofactor. As to expression, expressed by the venom gland.

It localises to the secreted. The catalysed reaction is an N-(acyl)-sphingosylphosphocholine = an N-(acyl)-sphingosyl-1,3-cyclic phosphate + choline. It carries out the reaction an N-(acyl)-sphingosylphosphoethanolamine = an N-(acyl)-sphingosyl-1,3-cyclic phosphate + ethanolamine. It catalyses the reaction a 1-acyl-sn-glycero-3-phosphocholine = a 1-acyl-sn-glycero-2,3-cyclic phosphate + choline. The enzyme catalyses a 1-acyl-sn-glycero-3-phosphoethanolamine = a 1-acyl-sn-glycero-2,3-cyclic phosphate + ethanolamine. Dermonecrotic toxins cleave the phosphodiester linkage between the phosphate and headgroup of certain phospholipids (sphingolipid and lysolipid substrates), forming an alcohol (often choline) and a cyclic phosphate. This toxin acts on sphingomyelin (SM). It may also act on ceramide phosphoethanolamine (CPE), lysophosphatidylcholine (LPC) and lysophosphatidylethanolamine (LPE), but not on lysophosphatidylserine (LPS), and lysophosphatidylglycerol (LPG). It acts by transphosphatidylation, releasing exclusively cyclic phosphate products as second products. Induces dermonecrosis, hemolysis, increased vascular permeability, edema, inflammatory response, and platelet aggregation. This chain is Dermonecrotic toxin LdSicTox-alphaIB3avi, found in Loxosceles deserta (Desert recluse spider).